A 471-amino-acid polypeptide reads, in one-letter code: Mitochondrial distribution and morphology protein 10 (471 aa).

Residues 429 to 455 are disordered; that stretch reads PSSFSSPSRAANSTPAGGGQSVGGGIS. Residues 444-455 are compositionally biased toward gly residues; it reads AGGGQSVGGGIS.

The protein belongs to the MDM10 family. As to quaternary structure, component of the ER-mitochondria encounter structure (ERMES) or MDM complex, composed of mmm1, mdm10, mdm12 and mdm34. Associates with the mitochondrial outer membrane sorting assembly machinery SAM(core) complex.

It localises to the mitochondrion outer membrane. Component of the ERMES/MDM complex, which serves as a molecular tether to connect the endoplasmic reticulum and mitochondria. Components of this complex are involved in the control of mitochondrial shape and protein biogenesis and may function in phospholipid exchange. mdm10 is involved in the late assembly steps of the general translocase of the mitochondrial outer membrane (TOM complex). Functions in the tom40-specific route of the assembly of outer membrane beta-barrel proteins, including the association of tom40 with the receptor tom22 and small TOM proteins. Can associate with the SAM(core) complex as well as the mdm12-mmm1 complex, both involved in late steps of the major beta-barrel assembly pathway, that is responsible for biogenesis of all outer membrane beta-barrel proteins. May act as a switch that shuttles between both complexes and channels precursor proteins into the tom40-specific pathway. Plays a role in mitochondrial morphology and in the inheritance of mitochondria. In Aspergillus fumigatus (strain ATCC MYA-4609 / CBS 101355 / FGSC A1100 / Af293) (Neosartorya fumigata), this protein is Mitochondrial distribution and morphology protein 10 (mdmB).